The following is a 360-amino-acid chain: Photosystem II protein D1 2 (360 aa).

A run of 3 helical transmembrane segments spans residues 29–46 (YIGW…AATT), 118–133 (HFLT…EWEL), and 142–156 (WICL…AATA). Residue histidine 118 coordinates chlorophyll a. Tyrosine 126 is a binding site for pheophytin a. Aspartate 170 and glutamate 189 together coordinate [CaMn4O5] cluster. Residues 197–218 (FHMLGVAGVFGGSLFSAMHGSL) form a helical membrane-spanning segment. Chlorophyll a is bound at residue histidine 198. Residues histidine 215 and 264 to 265 (SF) each bind a quinone. Histidine 215 contacts Fe cation. Histidine 272 provides a ligand contact to Fe cation. Residues 274-288 (FLAAWPVIGIWFTAL) traverse the membrane as a helical segment. [CaMn4O5] cluster-binding residues include histidine 332, glutamate 333, aspartate 342, and alanine 344. Residues 345–360 (AGEVAPVAISAPAING) constitute a propeptide that is removed on maturation.

Belongs to the reaction center PufL/M/PsbA/D family. As to quaternary structure, PSII is composed of 1 copy each of membrane proteins PsbA, PsbB, PsbC, PsbD, PsbE, PsbF, PsbH, PsbI, PsbJ, PsbK, PsbL, PsbM, PsbT, PsbX, PsbY, PsbZ, Psb30/Ycf12, peripheral proteins PsbO, CyanoQ (PsbQ), PsbU, PsbV and a large number of cofactors. It forms dimeric complexes. The cofactor is The D1/D2 heterodimer binds P680, chlorophylls that are the primary electron donor of PSII, and subsequent electron acceptors. It shares a non-heme iron and each subunit binds pheophytin, quinone, additional chlorophylls, carotenoids and lipids. D1 provides most of the ligands for the Mn4-Ca-O5 cluster of the oxygen-evolving complex (OEC). There is also a Cl(-1) ion associated with D1 and D2, which is required for oxygen evolution. The PSII complex binds additional chlorophylls, carotenoids and specific lipids.. Post-translationally, tyr-161 forms a radical intermediate that is referred to as redox-active TyrZ, YZ or Y-Z. C-terminally processed by CtpA; processing is essential to allow assembly of the oxygen-evolving complex and thus photosynthetic growth.

It localises to the cellular thylakoid membrane. It carries out the reaction 2 a plastoquinone + 4 hnu + 2 H2O = 2 a plastoquinol + O2. In terms of biological role, photosystem II (PSII) is a light-driven water:plastoquinone oxidoreductase that uses light energy to abstract electrons from H(2)O, generating O(2) and a proton gradient subsequently used for ATP formation. It consists of a core antenna complex that captures photons, and an electron transfer chain that converts photonic excitation into a charge separation. The D1/D2 (PsbA/PsbD) reaction center heterodimer binds P680, the primary electron donor of PSII as well as several subsequent electron acceptors. This Nostoc sp. (strain PCC 7120 / SAG 25.82 / UTEX 2576) protein is Photosystem II protein D1 2.